The primary structure comprises 100 residues: Urease subunit gamma (100 aa).

Belongs to the urease gamma subunit family. In terms of assembly, heterotrimer of UreA (gamma), UreB (beta) and UreC (alpha) subunits. Three heterotrimers associate to form the active enzyme.

It localises to the cytoplasm. It carries out the reaction urea + 2 H2O + H(+) = hydrogencarbonate + 2 NH4(+). It participates in nitrogen metabolism; urea degradation; CO(2) and NH(3) from urea (urease route): step 1/1. This is Urease subunit gamma from Alkalilimnicola ehrlichii (strain ATCC BAA-1101 / DSM 17681 / MLHE-1).